A 189-amino-acid chain; its full sequence is Threonylcarbamoyl-AMP synthase (189 aa).

The 187-residue stretch at 3 to 189 folds into the YrdC-like domain; it reads TTSVTEAAEC…NALTGEVIRP (187 aa).

Belongs to the SUA5 family. TsaC subfamily.

It localises to the cytoplasm. It catalyses the reaction L-threonine + hydrogencarbonate + ATP = L-threonylcarbamoyladenylate + diphosphate + H2O. Functionally, required for the formation of a threonylcarbamoyl group on adenosine at position 37 (t(6)A37) in tRNAs that read codons beginning with adenine. Catalyzes the conversion of L-threonine, HCO(3)(-)/CO(2) and ATP to give threonylcarbamoyl-AMP (TC-AMP) as the acyladenylate intermediate, with the release of diphosphate. The polypeptide is Threonylcarbamoyl-AMP synthase (Acinetobacter baumannii (strain ACICU)).